A 219-amino-acid chain; its full sequence is ATP phosphoribosyltransferase (219 aa).

This sequence belongs to the ATP phosphoribosyltransferase family. Short subfamily. As to quaternary structure, heteromultimer composed of HisG and HisZ subunits.

The protein localises to the cytoplasm. The catalysed reaction is 1-(5-phospho-beta-D-ribosyl)-ATP + diphosphate = 5-phospho-alpha-D-ribose 1-diphosphate + ATP. It functions in the pathway amino-acid biosynthesis; L-histidine biosynthesis; L-histidine from 5-phospho-alpha-D-ribose 1-diphosphate: step 1/9. Its function is as follows. Catalyzes the condensation of ATP and 5-phosphoribose 1-diphosphate to form N'-(5'-phosphoribosyl)-ATP (PR-ATP). Has a crucial role in the pathway because the rate of histidine biosynthesis seems to be controlled primarily by regulation of HisG enzymatic activity. The protein is ATP phosphoribosyltransferase of Clostridium kluyveri (strain NBRC 12016).